A 501-amino-acid chain; its full sequence is MENQLWHNTVRCCNQYQESPHDAEDILLLLLGLIVLVNIGINVATMMWHGLQNALDKMIDWATQKNEIQASESPPSGPPDKAQDVHIHCILDPVQVKMSRPTQYSSFSCHHFSNHHSSSLLRCVRRRRRRHRRCRRRCCNHQQRPQNYRQIPHSHSVFRNPHRSQKMSQLHRVPFFDQEDPDSYLEEEDNLPFPYPKYPRRGWGGFYQRAGLPSNVGLWGHQGGILASLPPPSLYLSPELRCMPKRVEARSELRLQSYGRHGSQSRLWGNVEAEQWASSPPPPHRLPPNPSWVPVGHSPYPSVGWMLYDSWDQRRRGTEGFERPPASVSRNARPEAQGCREHHSPQSHQQSLLGHAYGQSHRSPHPSTEPLGYSSQDPREVRRRAADWAEALPAWRPLTTSASLTVLDEASHQRTPAPSSVLVPHSSQPWPKVQAADPAPPPTMFVPLSRNPGGNANYQVYDSLELKRQVQKSRARSSSLPPASTSTLRPSLHRSQTEKLN.

Residues isoleucine 26–methionine 46 form a helical membrane-spanning segment. Disordered regions lie at residues arginine 316–arginine 384 and glutamate 409–asparagine 501. Over residues arginine 476–proline 490 the composition is skewed to low complexity.

Its subcellular location is the membrane. This is an uncharacterized protein from Homo sapiens (Human).